The primary structure comprises 589 residues: Class I diterpene synthase 2, chloroplastic (589 aa).

Mg(2+)-binding residues include Asp-328, Asp-332, Asn-472, Thr-476, and Glu-480. A DDXXD motif motif is present at residues 328–332 (DDFFD).

This sequence belongs to the terpene synthase family. It depends on Mg(2+) as a cofactor. In terms of tissue distribution, mostly expressed in trichomes of leaves and fruits.

The protein resides in the plastid. It is found in the chloroplast. The enzyme catalyses 9alpha-copalyl diphosphate + H2O = (13S)-vitexifolin A + diphosphate. It carries out the reaction peregrinol diphosphate = (13R)-9,13-epoxylabd-14-ene + diphosphate. It catalyses the reaction peregrinol diphosphate + H2O = viteagnusin D + diphosphate. Its pathway is secondary metabolite biosynthesis; terpenoid biosynthesis. Involved in the biosynthesis of labdane-type diterpenoid including cleroda-dienols, and peregrinol lactones and furan derivatives, dopaminergic diterpenoids that can bind to dopamine receptors in the human pituitary gland, have probably ability to lower prolactin levels, and are used to treat menstrual cycle disorders (e.g. premenstrual syndrome and mastodynia). Terpene synthase the catalyzes the conversion of peregrinol diphosphate to viteagnusin D and 9,13(R)-epoxy-labd-14-ene, and of syn-copalyl diphosophate to vitexifolin A. This chain is Class I diterpene synthase 2, chloroplastic, found in Vitex agnus-castus (Chaste tree).